Consider the following 82-residue polypeptide: MEPPVKINCPTCGRRFLSDETPAMPFCSKRCQLIDLGRWMNEEIGLPHEGDPGDAPVEYLDDRDLTQPSPERQNESFHRYSE.

Zn(2+) contacts are provided by cysteine 9, cysteine 12, cysteine 27, and cysteine 31. The interval 44 to 82 is disordered; that stretch reads IGLPHEGDPGDAPVEYLDDRDLTQPSPERQNESFHRYSE. Residues 72-82 show a composition bias toward basic and acidic residues; sequence RQNESFHRYSE.

It belongs to the DNA gyrase inhibitor YacG family. Interacts with GyrB. Zn(2+) is required as a cofactor.

Its function is as follows. Inhibits all the catalytic activities of DNA gyrase by preventing its interaction with DNA. Acts by binding directly to the C-terminal domain of GyrB, which probably disrupts DNA binding by the gyrase. This is DNA gyrase inhibitor YacG from Rhodopirellula baltica (strain DSM 10527 / NCIMB 13988 / SH1).